The primary structure comprises 713 residues: Phenylalanine ammonia-lyase (713 aa).

Tyr116 (proton donor/acceptor) is an active-site residue. The 5-imidazolinone (Ala-Gly) cross-link spans 217-219; the sequence is ASG. The residue at position 218 (Ser218) is a 2,3-didehydroalanine (Ser). (E)-cinnamate-binding residues include Asn272, Gln362, Arg368, Asn399, Lys470, Glu498, and Asn501.

This sequence belongs to the PAL/histidase family. In terms of assembly, homotetramer. Contains an active site 4-methylidene-imidazol-5-one (MIO), which is formed autocatalytically by cyclization and dehydration of residues Ala-Ser-Gly.

Its subcellular location is the cytoplasm. It carries out the reaction L-phenylalanine = (E)-cinnamate + NH4(+). The protein operates within phenylpropanoid metabolism; trans-cinnamate biosynthesis; trans-cinnamate from L-phenylalanine: step 1/1. In terms of biological role, catalyzes the non-oxidative deamination of L-phenylalanine to form trans-cinnamic acid and a free ammonium ion. Facilitates the commitment step in phenylpropanoid pathways that produce secondary metabolites such as lignins, coumarins and flavonoids. This Rhodotorula mucilaginosa (Yeast) protein is Phenylalanine ammonia-lyase (PAL).